A 227-amino-acid chain; its full sequence is Cytochrome c oxidase subunit 2 (227 aa).

The Mitochondrial intermembrane portion of the chain corresponds to methionine 1–serine 14. A helical membrane pass occupies residues proline 15–methionine 45. Over leucine 46 to glutamine 59 the chain is Mitochondrial matrix. Residues glutamate 60–methionine 87 traverse the membrane as a helical segment. At aspartate 88–isoleucine 227 the chain is on the mitochondrial intermembrane side. Cu cation contacts are provided by histidine 161, cysteine 196, glutamate 198, cysteine 200, histidine 204, and methionine 207. Glutamate 198 contacts Mg(2+). Phosphotyrosine is present on tyrosine 218.

This sequence belongs to the cytochrome c oxidase subunit 2 family. In terms of assembly, component of the cytochrome c oxidase (complex IV, CIV), a multisubunit enzyme composed of 14 subunits. The complex is composed of a catalytic core of 3 subunits MT-CO1, MT-CO2 and MT-CO3, encoded in the mitochondrial DNA, and 11 supernumerary subunits COX4I, COX5A, COX5B, COX6A, COX6B, COX6C, COX7A, COX7B, COX7C, COX8 and NDUFA4, which are encoded in the nuclear genome. The complex exists as a monomer or a dimer and forms supercomplexes (SCs) in the inner mitochondrial membrane with NADH-ubiquinone oxidoreductase (complex I, CI) and ubiquinol-cytochrome c oxidoreductase (cytochrome b-c1 complex, complex III, CIII), resulting in different assemblies (supercomplex SCI(1)III(2)IV(1) and megacomplex MCI(2)III(2)IV(2)). Found in a complex with TMEM177, COA6, COX18, COX20, SCO1 and SCO2. Interacts with TMEM177 in a COX20-dependent manner. Interacts with COX20. Interacts with COX16. Requires Cu cation as cofactor.

It localises to the mitochondrion inner membrane. The enzyme catalyses 4 Fe(II)-[cytochrome c] + O2 + 8 H(+)(in) = 4 Fe(III)-[cytochrome c] + 2 H2O + 4 H(+)(out). Functionally, component of the cytochrome c oxidase, the last enzyme in the mitochondrial electron transport chain which drives oxidative phosphorylation. The respiratory chain contains 3 multisubunit complexes succinate dehydrogenase (complex II, CII), ubiquinol-cytochrome c oxidoreductase (cytochrome b-c1 complex, complex III, CIII) and cytochrome c oxidase (complex IV, CIV), that cooperate to transfer electrons derived from NADH and succinate to molecular oxygen, creating an electrochemical gradient over the inner membrane that drives transmembrane transport and the ATP synthase. Cytochrome c oxidase is the component of the respiratory chain that catalyzes the reduction of oxygen to water. Electrons originating from reduced cytochrome c in the intermembrane space (IMS) are transferred via the dinuclear copper A center (CU(A)) of subunit 2 and heme A of subunit 1 to the active site in subunit 1, a binuclear center (BNC) formed by heme A3 and copper B (CU(B)). The BNC reduces molecular oxygen to 2 water molecules using 4 electrons from cytochrome c in the IMS and 4 protons from the mitochondrial matrix. The protein is Cytochrome c oxidase subunit 2 (MT-CO2) of Leopoldamys sabanus (Long-tailed giant rat).